A 746-amino-acid chain; its full sequence is Ring assembly protein 3 (746 aa).

It is found in the cytoplasm. Functionally, essential for actinomyosin ring assembly during cytokinesis. Has a role, in conjunction with F-actin, in assembling myosin II-containing proteins, such as myo2, at the division site. The polypeptide is Ring assembly protein 3 (rng3) (Schizosaccharomyces pombe (strain 972 / ATCC 24843) (Fission yeast)).